A 675-amino-acid polypeptide reads, in one-letter code: Alpha-1,4-glucan:maltose-1-phosphate maltosyltransferase 1 (675 aa).

Alpha-maltose 1-phosphate is bound by residues Lys-264, Gln-324, and Asp-359. The Nucleophile role is filled by Asp-394. Residue Asn-395 participates in alpha-maltose 1-phosphate binding. Catalysis depends on Glu-423, which acts as the Proton donor. Position 534–535 (534–535 (KY)) interacts with alpha-maltose 1-phosphate.

It belongs to the glycosyl hydrolase 13 family. GlgE subfamily. Homodimer.

The catalysed reaction is alpha-maltose 1-phosphate + [(1-&gt;4)-alpha-D-glucosyl](n) = [(1-&gt;4)-alpha-D-glucosyl](n+2) + phosphate. Its activity is regulated as follows. Is competitively inhibited by alpha-, beta- and gamma-cyclodextrins (cyclic maltooligosaccharides), unlike GlgE from M.tuberculosis. In terms of biological role, maltosyltransferase that uses maltose 1-phosphate (M1P) as the sugar donor to elongate linear or branched alpha-(1-&gt;4)-glucans. Maltooligosaccharides with a degree of polymerization (DP) superior or equal to 4 are efficient acceptors, with DP6 being optimal in the GlgE-catalyzed polymerization with M1P. Is specific for the alpha-anomer of M1P as substrate, since the beta-anomer of M1P gives no activity. Alpha-D-glucose 1-phosphate cannot serve as a donor substrate, but alpha-maltosyl fluoride is an efficient donor in vitro. Exhibits an alpha-retaining catalytic mechanism, with evidence that maltooligosaccharide acceptors are extended at their non-reducing ends. Is also able to catalyze the reverse reaction in vitro, releasing M1P from glycogen or maltoheptaose in the presence of inorganic phosphate. Also catalyzes disproportionation reactions through maltosyl transfer between maltooligosaccharides. Is probably involved in a branched alpha-glucan biosynthetic pathway from trehalose, together with TreS, Mak and GlgB. The sequence is that of Alpha-1,4-glucan:maltose-1-phosphate maltosyltransferase 1 (glgE1) from Streptomyces coelicolor (strain ATCC BAA-471 / A3(2) / M145).